Here is a 105-residue protein sequence, read N- to C-terminus: Large ribosomal subunit protein uL24 (105 aa).

It belongs to the universal ribosomal protein uL24 family. As to quaternary structure, part of the 50S ribosomal subunit.

One of two assembly initiator proteins, it binds directly to the 5'-end of the 23S rRNA, where it nucleates assembly of the 50S subunit. Functionally, one of the proteins that surrounds the polypeptide exit tunnel on the outside of the subunit. This chain is Large ribosomal subunit protein uL24, found in Francisella tularensis subsp. tularensis (strain FSC 198).